We begin with the raw amino-acid sequence, 318 residues long: Probable cell division protein WhiA (318 aa).

The H-T-H motif DNA-binding region spans 281-314 (SLKELGQMLVPPVGKSGVNHRLRKIEEISKKLKE).

This sequence belongs to the WhiA family.

Functionally, involved in cell division and chromosome segregation. The polypeptide is Probable cell division protein WhiA (Thermoanaerobacter sp. (strain X514)).